An 831-amino-acid polypeptide reads, in one-letter code: Leucine--tRNA ligase (831 aa).

The short motif at Pro36 to His46 is the 'HIGH' region element. The short motif at Lys607–Ser611 is the 'KMSKS' region element. Lys610 contributes to the ATP binding site.

This sequence belongs to the class-I aminoacyl-tRNA synthetase family.

Its subcellular location is the cytoplasm. It catalyses the reaction tRNA(Leu) + L-leucine + ATP = L-leucyl-tRNA(Leu) + AMP + diphosphate. The polypeptide is Leucine--tRNA ligase (Neorickettsia sennetsu (strain ATCC VR-367 / Miyayama) (Ehrlichia sennetsu)).